A 180-amino-acid chain; its full sequence is UPF0398 protein EF_1150 (180 aa).

It belongs to the UPF0398 family.

The sequence is that of UPF0398 protein EF_1150 from Enterococcus faecalis (strain ATCC 700802 / V583).